The primary structure comprises 278 residues: Serine protease 57 (278 aa).

A signal peptide spans 1–31 (MVPGTGGGRDCLTLVVATALTQLLWLPGCCG). Positions 34-263 (IVGGHEVKPH…FVSWIWDVVR (230 aa)) constitute a Peptidase S1 domain. Cysteine 59 and cysteine 75 are disulfide-bonded. Active-site charge relay system residues include histidine 74 and aspartate 122. Asparagine 129 carries an N-linked (GlcNAc...) asparagine glycan. Disulfide bonds link cysteine 157-cysteine 224, cysteine 188-cysteine 202, and cysteine 214-cysteine 239. Residue serine 218 is the Charge relay system of the active site.

It belongs to the peptidase S1 family. After cleavage of the signal peptide, the N-terminus is probably further processed by CTSC. Processing by CTSC is probably required for accumulation in cytoplasmic granules; in the absence of CTSC the protein does not accumulate. Post-translationally, N-glycosylated.

It is found in the cytoplasmic granule lumen. The protein localises to the secreted. In terms of biological role, serine protease that cleaves preferentially after Arg residues. Can also cleave after citrulline (deimidated arginine) and methylarginine residues. This chain is Serine protease 57 (Prss57), found in Rattus norvegicus (Rat).